The sequence spans 492 residues: Glutamyl-tRNA(Gln) amidotransferase subunit A (492 aa).

Active-site charge relay system residues include Lys78 and Ser158. The active-site Acyl-ester intermediate is the Ser182.

Belongs to the amidase family. GatA subfamily. As to quaternary structure, heterotrimer of A, B and C subunits.

The enzyme catalyses L-glutamyl-tRNA(Gln) + L-glutamine + ATP + H2O = L-glutaminyl-tRNA(Gln) + L-glutamate + ADP + phosphate + H(+). Functionally, allows the formation of correctly charged Gln-tRNA(Gln) through the transamidation of misacylated Glu-tRNA(Gln) in organisms which lack glutaminyl-tRNA synthetase. The reaction takes place in the presence of glutamine and ATP through an activated gamma-phospho-Glu-tRNA(Gln). The protein is Glutamyl-tRNA(Gln) amidotransferase subunit A of Orientia tsutsugamushi (strain Boryong) (Rickettsia tsutsugamushi).